The primary structure comprises 370 residues: Putrescine-binding periplasmic protein PotF (370 aa).

An N-terminal signal peptide occupies residues 1–26; it reads MTALNKKWLSGLVAGALMAVSVGTLA. Ser38 serves as a coordination point for putrescine. Cys175 and Cys239 form a disulfide bridge. The putrescine site is built by Asp247 and Asp278.

The protein belongs to the bacterial solute-binding protein PotD/PotF family. The complex is composed of two ATP-binding proteins (PotG), two transmembrane proteins (PotH and PotI) and a solute-binding protein (PotF).

It is found in the periplasm. With respect to regulation, transport is feedback inhibited by intracellular polyamines. Functionally, part of the ABC transporter complex PotFGHI involved in putrescine uptake. Binds putrescine. Imports putrescine for maintenance of the optimal concentration of polyamines necessary for cell growth in the presence of glucose. This chain is Putrescine-binding periplasmic protein PotF, found in Escherichia coli (strain K12).